Here is a 771-residue protein sequence, read N- to C-terminus: DNA helicase/primase complex-associated protein (771 aa).

It belongs to the herpesviridae HEPA family. Associates with the primase and the helicase to form the helicase-primase complex. Interacts with the origin-binding protein. Interacts with the polymerase catalytic subunit.

It is found in the host nucleus. Functionally, component of the helicase/primase complex. Unwinds the DNA at the replication forks and generates single-stranded DNA for both leading and lagging strand synthesis. The primase synthesizes short RNA primers on the lagging strand that the polymerase presumably elongates using dNTPs. The primase-associated factor has no known catalytic activity in the complex and may serve to facilitate the formation of the replisome by directly interacting with the origin-binding protein and the polymerase. The protein is DNA helicase/primase complex-associated protein of Homo sapiens (Human).